Here is a 451-residue protein sequence, read N- to C-terminus: 23S rRNA (uracil(1939)-C(5))-methyltransferase RlmD (451 aa).

Residues 20–78 (QIPAGKKQRLTIERLSDDGRGIAFLEGKTWFVAGSLAGEEVEARVLNARGKVVEARTER) enclose the TRAM domain. Residues Cys-91, Cys-97, Cys-100, and Cys-179 each contribute to the [4Fe-4S] cluster site. Gln-283, Phe-312, Asn-317, Glu-333, Asp-360, and Asp-381 together coordinate S-adenosyl-L-methionine. Cys-407 acts as the Nucleophile in catalysis.

It belongs to the class I-like SAM-binding methyltransferase superfamily. RNA M5U methyltransferase family. RlmD subfamily.

The catalysed reaction is uridine(1939) in 23S rRNA + S-adenosyl-L-methionine = 5-methyluridine(1939) in 23S rRNA + S-adenosyl-L-homocysteine + H(+). Catalyzes the formation of 5-methyl-uridine at position 1939 (m5U1939) in 23S rRNA. The sequence is that of 23S rRNA (uracil(1939)-C(5))-methyltransferase RlmD from Pseudomonas savastanoi pv. phaseolicola (strain 1448A / Race 6) (Pseudomonas syringae pv. phaseolicola (strain 1448A / Race 6)).